Reading from the N-terminus, the 238-residue chain is 3-dehydroquinate dehydratase (238 aa).

3-dehydroquinate contacts are provided by residues 35–37 (ELR) and arginine 70. Catalysis depends on histidine 133, which acts as the Proton donor/acceptor. The Schiff-base intermediate with substrate role is filled by lysine 160. Positions 202 and 225 each coordinate 3-dehydroquinate.

This sequence belongs to the type-I 3-dehydroquinase family. Homodimer.

It catalyses the reaction 3-dehydroquinate = 3-dehydroshikimate + H2O. It participates in metabolic intermediate biosynthesis; chorismate biosynthesis; chorismate from D-erythrose 4-phosphate and phosphoenolpyruvate: step 3/7. Its function is as follows. Involved in the third step of the chorismate pathway, which leads to the biosynthesis of aromatic amino acids. Catalyzes the cis-dehydration of 3-dehydroquinate (DHQ) and introduces the first double bond of the aromatic ring to yield 3-dehydroshikimate. This chain is 3-dehydroquinate dehydratase, found in Staphylococcus aureus (strain Mu3 / ATCC 700698).